The sequence spans 199 residues: MRLFIILSVASFGAIGVLSQGGGGGGAAGGLLEGGGGFEEYGHRSRGSIIGLSRGIEIGRHYGGGGGGGGEGEEGREHELRGGGLELGGGGGGGGGGGGGGGEGRHYEIGFGGSHFNTPVDVHHEEAIHLKAHPEYHSDYHVADHKTKDFKSKHEVRDGYKVKGTYSLLEPDHKTVRVVDYVSDKKRGFIARVSYRKHH.

An N-terminal signal peptide occupies residues 1-19 (MRLFIILSVASFGAIGVLS). The interval 63–103 (GGGGGGGGEGEEGREHELRGGGLELGGGGGGGGGGGGGGGE) is disordered. Residues 82–102 (GGGLELGGGGGGGGGGGGGGG) are compositionally biased toward gly residues. The Chitin-binding type R&amp;R domain occupies 133–199 (HPEYHSDYHV…IARVSYRKHH (67 aa)).

In terms of tissue distribution, epidermal regions synthesizing hard cuticle.

Functionally, cuticular proteins play a significant role in determining the physical properties of cuticles. The polypeptide is Adult-specific cuticular protein ACP-22 (ACP22) (Tenebrio molitor (Yellow mealworm beetle)).